The chain runs to 417 residues: Serine protease hepsin (417 aa).

The Cytoplasmic segment spans residues 1–23 (MAQKEGGRTVPCCSRPKVAALTA). Residues 24–44 (GTLLLLTAIGAASWAIVAVLL) form a helical; Signal-anchor for type II membrane protein membrane-spanning segment. Over 45–417 (RSDQEPLYPV…SEASGMVTQL (373 aa)) the chain is Extracellular. The SRCR domain occupies 54–151 (VQVSSADARL…RGRFLAAICQ (98 aa)). 8 cysteine pairs are disulfide-bonded: Cys77–Cys140, Cys90–Cys150, Cys119–Cys138, Cys153–Cys277, Cys188–Cys204, Cys291–Cys359, Cys322–Cys338, and Cys349–Cys381. N-linked (GlcNAc...) asparagine glycosylation occurs at Asn112. The Peptidase S1 domain maps to 163–405 (IVGGRDTSLG…FREWIFQAIK (243 aa)). Active-site charge relay system residues include His203 and Asp257. Ser353 (charge relay system) is an active-site residue.

Belongs to the peptidase S1 family. As to expression, detected in liver and kidney.

The protein resides in the cell membrane. The protein localises to the apical cell membrane. It carries out the reaction Cleavage after basic amino-acid residues, with Arg strongly preferred to Lys.. Serine protease that cleaves extracellular substrates, and contributes to the proteolytic processing of growth factors, such as HGF and MST1/HGFL. Plays a role in cell growth and maintenance of cell morphology. Plays a role in the proteolytic processing of ACE2. Mediates the proteolytic cleavage of urinary UMOD that is required for UMOD polymerization. This Homo sapiens (Human) protein is Serine protease hepsin (HPN).